The following is a 328-amino-acid chain: 6-phosphogluconolactonase (328 aa).

Belongs to the cycloisomerase 2 family.

The enzyme catalyses 6-phospho-D-glucono-1,5-lactone + H2O = 6-phospho-D-gluconate + H(+). It participates in carbohydrate degradation; pentose phosphate pathway; D-ribulose 5-phosphate from D-glucose 6-phosphate (oxidative stage): step 2/3. Catalyzes the hydrolysis of 6-phosphogluconolactone to 6-phosphogluconate. This Photorhabdus laumondii subsp. laumondii (strain DSM 15139 / CIP 105565 / TT01) (Photorhabdus luminescens subsp. laumondii) protein is 6-phosphogluconolactonase.